The sequence spans 407 residues: Proteasome-activating nucleotidase (407 aa).

Residues 22–67 are a coiled coil; it reads KEKTQIAELESKVLRLELKNKDVTRENVQIKKENEILKRELDKLRI. Residues 192–197 and H331 each bind ATP; that span reads GTGKTL. The segment at 405 to 407 is docks into pockets in the proteasome alpha-ring to cause gate opening; it reads MYG.

The protein belongs to the AAA ATPase family. Homohexamer. The hexameric complex has a two-ring architecture resembling a top hat that caps the 20S proteasome core at one or both ends. Upon ATP-binding, the C-terminus of PAN interacts with the alpha-rings of the proteasome core by binding to the intersubunit pockets.

The protein localises to the cytoplasm. ATPase which is responsible for recognizing, binding, unfolding and translocation of substrate proteins into the archaeal 20S proteasome core particle. Is essential for opening the gate of the 20S proteasome via an interaction with its C-terminus, thereby allowing substrate entry and access to the site of proteolysis. Thus, the C-termini of the proteasomal ATPase function like a 'key in a lock' to induce gate opening and therefore regulate proteolysis. Unfolding activity requires energy from ATP hydrolysis, whereas ATP binding alone promotes ATPase-20S proteasome association which triggers gate opening, and supports translocation of unfolded substrates. This Methanococcus maripaludis (strain C7 / ATCC BAA-1331) protein is Proteasome-activating nucleotidase.